The primary structure comprises 157 residues: Transcription elongation factor GreA (157 aa).

This sequence belongs to the GreA/GreB family.

In terms of biological role, necessary for efficient RNA polymerase transcription elongation past template-encoded arresting sites. The arresting sites in DNA have the property of trapping a certain fraction of elongating RNA polymerases that pass through, resulting in locked ternary complexes. Cleavage of the nascent transcript by cleavage factors such as GreA or GreB allows the resumption of elongation from the new 3'terminus. GreA releases sequences of 2 to 3 nucleotides. This is Transcription elongation factor GreA from Maricaulis maris (strain MCS10) (Caulobacter maris).